Here is a 526-residue protein sequence, read N- to C-terminus: Na(+)/H(+) antiporter NhaB (526 aa).

12 helical membrane-spanning segments follow: residues 25–45, 52–72, 89–109, 130–164, 204–224, 242–262, 307–327, 350–370, 391–411, 448–468, 479–499, and 505–525; these read ILLF…IAGW, IFTL…LLAI, LVAN…IYFM, LSLA…FYAI, LMMH…VGEP, IRMS…CVLV, IALW…LIGL, QEAL…AVII, LALF…VFVG, VATP…LAPL, MALP…EMLL, and WFYQ…LPVL.

Belongs to the NhaB Na(+)/H(+) (TC 2.A.34) antiporter family.

The protein resides in the cell inner membrane. The catalysed reaction is 2 Na(+)(in) + 3 H(+)(out) = 2 Na(+)(out) + 3 H(+)(in). Na(+)/H(+) antiporter that extrudes sodium in exchange for external protons. The chain is Na(+)/H(+) antiporter NhaB from Aeromonas hydrophila subsp. hydrophila (strain ATCC 7966 / DSM 30187 / BCRC 13018 / CCUG 14551 / JCM 1027 / KCTC 2358 / NCIMB 9240 / NCTC 8049).